A 164-amino-acid chain; its full sequence is Small ribosomal subunit protein uS5 (164 aa).

The region spanning 9 to 72 (YQEKLLKISR…AAAKKNIVKI (64 aa)) is the S5 DRBM domain.

The protein belongs to the universal ribosomal protein uS5 family. In terms of assembly, part of the 30S ribosomal subunit. Contacts proteins S4 and S8.

With S4 and S12 plays an important role in translational accuracy. In terms of biological role, located at the back of the 30S subunit body where it stabilizes the conformation of the head with respect to the body. The sequence is that of Small ribosomal subunit protein uS5 from Fusobacterium nucleatum subsp. nucleatum (strain ATCC 25586 / DSM 15643 / BCRC 10681 / CIP 101130 / JCM 8532 / KCTC 2640 / LMG 13131 / VPI 4355).